Consider the following 88-residue polypeptide: MIKLRLKRCGRKQRAVYQIVAIDVRSPREGKALRKVGFYDPIKNQTDLNVRAILYFLEKGAQPTGTVQDILKKAEIDKELRPNQTKFN.

The protein belongs to the bacterial ribosomal protein bS16 family.

It is found in the plastid. The protein localises to the chloroplast. The polypeptide is Small ribosomal subunit protein bS16c (Jasminum nudiflorum (Winter jasmine)).